Here is a 216-residue protein sequence, read N- to C-terminus: LexA repressor (216 aa).

Positions 29 to 49 (RAEIAQALGFRSPNAAEDHLK) form a DNA-binding region, H-T-H motif. Catalysis depends on for autocatalytic cleavage activity residues serine 134 and lysine 171.

The protein belongs to the peptidase S24 family. Homodimer.

The enzyme catalyses Hydrolysis of Ala-|-Gly bond in repressor LexA.. In terms of biological role, represses a number of genes involved in the response to DNA damage (SOS response), including recA and lexA. In the presence of single-stranded DNA, RecA interacts with LexA causing an autocatalytic cleavage which disrupts the DNA-binding part of LexA, leading to derepression of the SOS regulon and eventually DNA repair. This Bordetella parapertussis (strain 12822 / ATCC BAA-587 / NCTC 13253) protein is LexA repressor.